A 22-amino-acid polypeptide reads, in one-letter code: Large ribosomal subunit protein bL32 (22 aa).

A disordered region spans residues 1-22 (CVQQNKKSRSARDMXXSXDALE). Residues 13–22 (DMXXSXDALE) are compositionally biased toward low complexity.

Belongs to the bacterial ribosomal protein bL32 family.

This Ectopseudomonas mendocina (Pseudomonas mendocina) protein is Large ribosomal subunit protein bL32 (rpmF).